The chain runs to 828 residues: DNA gyrase subunit A (828 aa).

The 466-residue stretch at 32 to 497 (LPDVRDGLKP…EVLSLEDEDL (466 aa)) folds into the Topo IIA-type catalytic domain. Tyr120 functions as the O-(5'-phospho-DNA)-tyrosine intermediate in the catalytic mechanism. Positions 524-530 (QKRGGRG) match the GyrA-box motif.

Belongs to the type II topoisomerase GyrA/ParC subunit family. As to quaternary structure, heterotetramer, composed of two GyrA and two GyrB chains. In the heterotetramer, GyrA contains the active site tyrosine that forms a transient covalent intermediate with DNA, while GyrB binds cofactors and catalyzes ATP hydrolysis.

The protein localises to the cytoplasm. The catalysed reaction is ATP-dependent breakage, passage and rejoining of double-stranded DNA.. A type II topoisomerase that negatively supercoils closed circular double-stranded (ds) DNA in an ATP-dependent manner to modulate DNA topology and maintain chromosomes in an underwound state. Negative supercoiling favors strand separation, and DNA replication, transcription, recombination and repair, all of which involve strand separation. Also able to catalyze the interconversion of other topological isomers of dsDNA rings, including catenanes and knotted rings. Type II topoisomerases break and join 2 DNA strands simultaneously in an ATP-dependent manner. This Streptococcus pyogenes serotype M3 (strain ATCC BAA-595 / MGAS315) protein is DNA gyrase subunit A.